An 821-amino-acid polypeptide reads, in one-letter code: E3 ubiquitin-protein ligase RSP5 (821 aa).

The C2 domain occupies 1–112 (MGSNLPAQPN…QMGGDEMLTR (112 aa)). 2 stretches are compositionally biased toward polar residues: residues 133–144 (TNLSTPNPNQAN) and 188–201 (LNPQ…RPTS). Disordered regions lie at residues 133–239 (TNLS…GWER) and 255–359 (RTTT…YFVD). Over residues 202–217 (QIAPPNGAPPIANGQG) the composition is skewed to low complexity. In terms of domain architecture, WW 1 spans 231–264 (GRLPAGWERREDNLGRTYYVDHNTRTTTWNRPSA). The span at 255–272 (RTTTWNRPSANYNEQTQR) shows a compositional bias: polar residues. Residues 281 to 296 (LERRAHQNRMLPEDRT) are compositionally biased toward basic and acidic residues. The segment covering 297–312 (GASSPNLSETQPQAQT) has biased composition (polar residues). Over residues 320–339 (ASNSNVVSMMATGATTAGTG) the composition is skewed to low complexity. WW domains lie at 339-372 (GELP…DPRR) and 399-432 (GPLP…DPRL). The HECT domain maps to 488 to 821 (SASDLKKRLM…VEETLGFGQE (334 aa)). C789 serves as the catalytic Glycyl thioester intermediate.

It belongs to the RSP5/NEDD4 family. Interacts with apyA and creD.

It is found in the cytoplasm. It catalyses the reaction S-ubiquitinyl-[E2 ubiquitin-conjugating enzyme]-L-cysteine + [acceptor protein]-L-lysine = [E2 ubiquitin-conjugating enzyme]-L-cysteine + N(6)-ubiquitinyl-[acceptor protein]-L-lysine.. Its pathway is protein modification; protein ubiquitination. Its function is as follows. E3 ubiquitin-protein ligase which accepts ubiquitin from an E2 ubiquitin-conjugating enzyme in the form of a thioester and then directly transfers the ubiquitin to targeted substrates. Probably involved in the regulatory network controlling carbon source utilization. Ubiquitinates 'Lys-528' of the uric acid/xanthine transporter uapA at the cell membrane, leading to its internalization, sorting into the endosomal pathway to the vacuolar lumen where it is eventually degraded. This Emericella nidulans (strain FGSC A4 / ATCC 38163 / CBS 112.46 / NRRL 194 / M139) (Aspergillus nidulans) protein is E3 ubiquitin-protein ligase RSP5 (hulA).